The sequence spans 551 residues: Colicin E3 (551 aa).

3 disordered regions span residues 1-74 (MSGG…SGGG), 243-269 (TLSPGVTNNTDKDVRPAGFTQGGNTRD), and 293-320 (PDQVKQRQDEENRRQQEWDATHPVEAAE). A translocation (T) domain region spans residues 1 to 315 (MSGGDGRGHN…RQQEWDATHP (315 aa)). Residues 20–35 (INGGPTGLGVGGGASD) are compositionally biased toward gly residues. A Binds to TolB motif is present at residues 35–39 (DGSGW). Low complexity predominate over residues 36–45 (GSGWSSENNP). Over residues 46 to 74 (WGGGSGSGIHWGGGSGHGNGGGNGNSGGG) the composition is skewed to gly residues. Basic and acidic residues predominate over residues 296-320 (VKQRQDEENRRQQEWDATHPVEAAE). A coiled-coil region spans residues 316–378 (VEAAERNYER…IAEIKQFNRF (63 aa)). The receptor-binding (R) domain stretch occupies residues 316–450 (VEAAERNYER…SAENNLNDEK (135 aa)). Positions 379–385 (AHDPMAG) match the Hairpin motif. Residues 386–450 (GHRMWQMAGL…SAENNLNDEK (65 aa)) are a coiled coil. The interval 406–505 (NKQAAFDAAA…KRWTGDKGRK (100 aa)) is disordered. Over residues 430 to 472 (ESRKKKEDKKRSAENNLNDEKNKPRKGFKDYGHDYHPAPKTEN) the composition is skewed to basic and acidic residues. The tract at residues 451–456 (NKPRKG) is linker. The segment at 455–551 (KGFKDYGHDY…DPKRNIKKYL (97 aa)) is ribosome inactivating activity. The tract at residues 457-551 (FKDYGHDYHP…DPKRNIKKYL (95 aa)) is cytotoxic RNase (C) domain. His-513 serves as the catalytic Proton donor. The active-site Proton acceptor is the Glu-517. The disordered stretch occupies residues 517–551 (EGYRASDGQHLGSFDPKTGNQLKGPDPKRNIKKYL). The segment at 530–551 (FDPKTGNQLKGPDPKRNIKKYL) is binding of immunity protein. The active site involves Arg-545.

The protein belongs to the cloacin colicin family. As to quaternary structure, native colicin E3 is a 1:1 complex of A chain and protein B (cognate immunity protein, Im3); protein A is 1,000-fold more active in inactivating ribosomes than the native complex. The cytotoxic fragment (residues 456-551, C95) forms a 1:1 complex with Im3. The receptor-binding (R) domain binds obliquely to its receptor BtuB without displacing BtuB's central plug; binding unfolds the R domain. The N-terminal 83 residues (T83) bind OmpF; trimeric complexes with colicin E3, BtuB and OmpF can be cross-linked and immunoprecipitated. Probably inserts into the OmpF pore as an unfolded peptide and spans the OmpF pore. In a complex with T.thermophilus 70S ribosomes, cytotoxic fragment C96 contacts 16S rRNA, 23S rRNA, mRNA, P-site tRNA and ribosomal protein uS12.

Its subcellular location is the secreted. Functionally, colicins are polypeptide toxins produced by and active against E.coli and closely related bacteria. Cleaves 16S rRNA between adenosine-1492 and guanosine-1493 (E.coli 16S rRNA numbering), releasing a 49 nucleotide (nt) 'colicin' fragment. Inactivates 70S ribosomes or 30S subunits by endonucleolytically cleaving 16S RNA at a specific site about 50 nt from its C-terminus. Produces 5'-OH-guanosine and a 2',3'-cyclic phosphate adenosine. Mixing a susceptible (e.g. strain K12 / A19) and colicin E3 producing strain results in total protein translation inhibition within 11 minutes. Its activity is inhibited by cognate immunity protein Im3. In terms of biological role, uses BtuB, the vitamin B transporter, as a receptor on the outer membrane; binds via the receptor (R) domain. Then the translocation domain (T) probably 'fishes' for its outer membrane translocon protein, OmpF. The N-terminal 83 residues (T83) can bind to and occlude OmpF channels. A complex of the cytotoxic C-terminal 96 residues (C96) plus the immunity protein does not occlude OmpF; upon complex separation from the immunity protein C96 becomes disordered and is able to bind OmpF. The N-terminus probably binds TolB and then reinserts into an empty pore of trimeric OmpF; the rest of the protein is pulled through OmpF and crosses the inner membrane, where the cytotoxic fragment is probably released by protease FtsH. This Escherichia coli protein is Colicin E3 (ceaC).